Here is a 315-residue protein sequence, read N- to C-terminus: Peroxidase 1 (315 aa).

Residues 1 to 21 (MASSSYTSLLVLVALVTAASA) form the signal peptide. A Pyrrolidone carboxylic acid modification is found at glutamine 22. Disulfide bonds link cysteine 32–cysteine 107, cysteine 65–cysteine 70, cysteine 113–cysteine 310, and cysteine 193–cysteine 219. Histidine 63 serves as the catalytic Proton acceptor. Positions 64, 67, 69, 71, and 73 each coordinate Ca(2+). Substrate is bound at residue proline 155. A glycan (N-linked (GlcNAc...) asparagine) is linked at asparagine 158. Heme b is bound at residue histidine 186. Residue threonine 187 coordinates Ca(2+). Residues aspartate 234, threonine 237, and aspartate 242 each coordinate Ca(2+). The N-linked (GlcNAc...) asparagine glycan is linked to asparagine 265.

The protein belongs to the peroxidase family. Classical plant (class III) peroxidase subfamily. Ca(2+) serves as cofactor. The cofactor is heme b.

It is found in the secreted. It carries out the reaction 2 a phenolic donor + H2O2 = 2 a phenolic radical donor + 2 H2O. Removal of H(2)O(2), oxidation of toxic reductants, biosynthesis and degradation of lignin, suberization, auxin catabolism, response to environmental stresses such as wounding, pathogen attack and oxidative stress. These functions might be dependent on each isozyme/isoform in each plant tissue. Functionally, involved in defense response to powdery meldew fungus. The sequence is that of Peroxidase 1 from Hordeum vulgare (Barley).